The following is a 212-amino-acid chain: Cyclin-dependent kinase inhibitor 3 (212 aa).

The disordered stretch occupies residues 1–24 (MKPPISIQASEFDSSDEEPADDEQ). Positions 1 to 34 (MKPPISIQASEFDSSDEEPADDEQTPIQISWLPL) are interaction with CDK2. Residues 13 to 24 (DSSDEEPADDEQ) are compositionally biased toward acidic residues. The region spanning 32–201 (LPLSRVNCSQ…FRDKLAAYLS (170 aa)) is the Tyrosine-protein phosphatase domain. Residue Cys-140 is the Phosphocysteine intermediate of the active site.

It belongs to the protein-tyrosine phosphatase family. Interacts with cyclin-dependent kinases such as CDK1, CDK2 and CDK3. Does not interact with CDK4. Interacts (via C-terminus) with phosphorylated CDK2 (via C-terminal helix). Interacts with MS4A3 (via C-terminus); the interaction enhances CDKN3 enzymatic activity.

It is found in the cytoplasm. The protein localises to the perinuclear region. It carries out the reaction O-phospho-L-tyrosyl-[protein] + H2O = L-tyrosyl-[protein] + phosphate. The catalysed reaction is O-phospho-L-seryl-[protein] + H2O = L-seryl-[protein] + phosphate. The enzyme catalyses O-phospho-L-threonyl-[protein] + H2O = L-threonyl-[protein] + phosphate. Functionally, may play a role in cell cycle regulation. Dual specificity phosphatase active toward substrates containing either phosphotyrosine or phosphoserine residues. Dephosphorylates CDK2 at 'Thr-160' in a cyclin-dependent manner. The sequence is that of Cyclin-dependent kinase inhibitor 3 from Rattus norvegicus (Rat).